A 250-amino-acid polypeptide reads, in one-letter code: tRNA pseudouridine synthase A (250 aa).

The Nucleophile role is filled by Asp52. Tyr111 is a binding site for substrate.

It belongs to the tRNA pseudouridine synthase TruA family. As to quaternary structure, homodimer.

It carries out the reaction uridine(38/39/40) in tRNA = pseudouridine(38/39/40) in tRNA. In terms of biological role, formation of pseudouridine at positions 38, 39 and 40 in the anticodon stem and loop of transfer RNAs. This is tRNA pseudouridine synthase A from Methylobacterium sp. (strain 4-46).